The primary structure comprises 81 residues: ATP synthase subunit c (81 aa).

2 consecutive transmembrane segments (helical) span residues 7-27 (AASV…PGIG) and 57-77 (LAFM…LLFA).

This sequence belongs to the ATPase C chain family. F-type ATPases have 2 components, F(1) - the catalytic core - and F(0) - the membrane proton channel. F(1) has five subunits: alpha(3), beta(3), gamma(1), delta(1), epsilon(1). F(0) has four main subunits: a(1), b(1), b'(1) and c(10-14). The alpha and beta chains form an alternating ring which encloses part of the gamma chain. F(1) is attached to F(0) by a central stalk formed by the gamma and epsilon chains, while a peripheral stalk is formed by the delta, b and b' chains.

The protein localises to the cellular thylakoid membrane. F(1)F(0) ATP synthase produces ATP from ADP in the presence of a proton or sodium gradient. F-type ATPases consist of two structural domains, F(1) containing the extramembraneous catalytic core and F(0) containing the membrane proton channel, linked together by a central stalk and a peripheral stalk. During catalysis, ATP synthesis in the catalytic domain of F(1) is coupled via a rotary mechanism of the central stalk subunits to proton translocation. Its function is as follows. Key component of the F(0) channel; it plays a direct role in translocation across the membrane. A homomeric c-ring of between 10-14 subunits forms the central stalk rotor element with the F(1) delta and epsilon subunits. The sequence is that of ATP synthase subunit c from Nostoc sp. (strain PCC 7120 / SAG 25.82 / UTEX 2576).